Consider the following 484-residue polypeptide: Malonate-semialdehyde dehydrogenase 2 (484 aa).

The NAD(+) site is built by phenylalanine 153, lysine 177, glutamate 180, arginine 181, serine 230, and threonine 252. Catalysis depends on cysteine 285, which acts as the Nucleophile. Glutamate 385 provides a ligand contact to NAD(+).

It belongs to the aldehyde dehydrogenase family. IolA subfamily. Homotetramer.

The enzyme catalyses 3-oxopropanoate + NAD(+) + CoA + H2O = hydrogencarbonate + acetyl-CoA + NADH + H(+). It catalyses the reaction 2-methyl-3-oxopropanoate + NAD(+) + CoA + H2O = propanoyl-CoA + hydrogencarbonate + NADH + H(+). Its pathway is polyol metabolism; myo-inositol degradation into acetyl-CoA; acetyl-CoA from myo-inositol: step 7/7. Functionally, catalyzes the oxidation of malonate semialdehyde (MSA) and methylmalonate semialdehyde (MMSA) into acetyl-CoA and propanoyl-CoA, respectively. Is involved in a myo-inositol catabolic pathway. Bicarbonate, and not CO2, is the end-product of the enzymatic reaction. The polypeptide is Malonate-semialdehyde dehydrogenase 2 (Geobacillus kaustophilus (strain HTA426)).